Reading from the N-terminus, the 81-residue chain is Photosystem I iron-sulfur center (81 aa).

2 consecutive 4Fe-4S ferredoxin-type domains span residues 2 to 31 (SHFV…MIPW) and 39 to 68 (IASA…VRVY). [4Fe-4S] cluster-binding residues include cysteine 11, cysteine 14, cysteine 17, cysteine 21, cysteine 48, cysteine 51, cysteine 54, and cysteine 58.

In terms of assembly, the eukaryotic PSI reaction center is composed of at least 11 subunits. [4Fe-4S] cluster is required as a cofactor.

Its subcellular location is the plastid thylakoid membrane. It carries out the reaction reduced [plastocyanin] + hnu + oxidized [2Fe-2S]-[ferredoxin] = oxidized [plastocyanin] + reduced [2Fe-2S]-[ferredoxin]. Apoprotein for the two 4Fe-4S centers FA and FB of photosystem I (PSI); essential for photochemical activity. FB is the terminal electron acceptor of PSI, donating electrons to ferredoxin. The C-terminus interacts with PsaA/B/D and helps assemble the protein into the PSI complex. Required for binding of PsaD and PsaE to PSI. PSI is a plastocyanin-ferredoxin oxidoreductase, converting photonic excitation into a charge separation, which transfers an electron from the donor P700 chlorophyll pair to the spectroscopically characterized acceptors A0, A1, FX, FA and FB in turn. The chain is Photosystem I iron-sulfur center from Cuscuta exaltata (Tall dodder).